A 147-amino-acid chain; its full sequence is Large ribosomal subunit protein uL15 (147 aa).

Residues 1–57 are disordered; sequence MRLEDLRPTPGSMKKRKRVGRGPGSGHGKTSGRGHKGQKARGTGKVHPWFEGGQTPL. Residues 30–44 show a composition bias toward basic residues; the sequence is TSGRGHKGQKARGTG.

It belongs to the universal ribosomal protein uL15 family. As to quaternary structure, part of the 50S ribosomal subunit.

In terms of biological role, binds to the 23S rRNA. The sequence is that of Large ribosomal subunit protein uL15 from Thermotoga neapolitana (strain ATCC 49049 / DSM 4359 / NBRC 107923 / NS-E).